A 509-amino-acid polypeptide reads, in one-letter code: Histidine ammonia-lyase (509 aa).

Residues 144 to 146 (ASG) constitute a cross-link (5-imidazolinone (Ala-Gly)). Ser145 carries the post-translational modification 2,3-didehydroalanine (Ser).

The protein belongs to the PAL/histidase family. Post-translationally, contains an active site 4-methylidene-imidazol-5-one (MIO), which is formed autocatalytically by cyclization and dehydration of residues Ala-Ser-Gly.

It localises to the cytoplasm. The catalysed reaction is L-histidine = trans-urocanate + NH4(+). The protein operates within amino-acid degradation; L-histidine degradation into L-glutamate; N-formimidoyl-L-glutamate from L-histidine: step 1/3. The polypeptide is Histidine ammonia-lyase (Pseudoalteromonas atlantica (strain T6c / ATCC BAA-1087)).